The chain runs to 340 residues: Dihydroorotate dehydrogenase (quinone) (340 aa).

FMN-binding positions include 67–71 (AGFDK) and Thr-91. Lys-71 contributes to the substrate binding site. A substrate-binding site is contributed by 116–120 (NRMGF). 2 residues coordinate FMN: Asn-143 and Asn-176. Substrate is bound at residue Asn-176. Residue Ser-179 is the Nucleophile of the active site. Position 181 (Asn-181) interacts with substrate. Lys-217 and Thr-245 together coordinate FMN. Residue 246–247 (NT) participates in substrate binding. Residues Gly-267, Gly-296, and 317–318 (YT) each bind FMN.

Belongs to the dihydroorotate dehydrogenase family. Type 2 subfamily. Monomer. The cofactor is FMN.

The protein resides in the cell membrane. It catalyses the reaction (S)-dihydroorotate + a quinone = orotate + a quinol. The protein operates within pyrimidine metabolism; UMP biosynthesis via de novo pathway; orotate from (S)-dihydroorotate (quinone route): step 1/1. In terms of biological role, catalyzes the conversion of dihydroorotate to orotate with quinone as electron acceptor. In Christiangramia forsetii (strain DSM 17595 / CGMCC 1.15422 / KT0803) (Gramella forsetii), this protein is Dihydroorotate dehydrogenase (quinone).